The chain runs to 115 residues: Large ribosomal subunit protein bL20 (115 aa).

This sequence belongs to the bacterial ribosomal protein bL20 family.

In terms of biological role, binds directly to 23S ribosomal RNA and is necessary for the in vitro assembly process of the 50S ribosomal subunit. It is not involved in the protein synthesizing functions of that subunit. The polypeptide is Large ribosomal subunit protein bL20 (Prochlorococcus marinus (strain SARG / CCMP1375 / SS120)).